We begin with the raw amino-acid sequence, 199 residues long: Protein GrpE (199 aa).

Residues 1–17 are compositionally biased toward polar residues; it reads MSDSDNNTKSQQNNPTQ. Positions 1-36 are disordered; the sequence is MSDSDNNTKSQQNNPTQTDEKSGEEIQSNQKPQRKF.

It belongs to the GrpE family. In terms of assembly, homodimer.

The protein resides in the cytoplasm. Its function is as follows. Participates actively in the response to hyperosmotic and heat shock by preventing the aggregation of stress-denatured proteins, in association with DnaK and GrpE. It is the nucleotide exchange factor for DnaK and may function as a thermosensor. Unfolded proteins bind initially to DnaJ; upon interaction with the DnaJ-bound protein, DnaK hydrolyzes its bound ATP, resulting in the formation of a stable complex. GrpE releases ADP from DnaK; ATP binding to DnaK triggers the release of the substrate protein, thus completing the reaction cycle. Several rounds of ATP-dependent interactions between DnaJ, DnaK and GrpE are required for fully efficient folding. This chain is Protein GrpE, found in Ehrlichia canis (strain Jake).